Here is a 452-residue protein sequence, read N- to C-terminus: Adenylyltransferase and sulfurtransferase MOCS3 (452 aa).

Residues glycine 99, aspartate 120, 127-131 (SNLHR), lysine 144, and 188-189 (DN) each bind ATP. Residues cysteine 230 and cysteine 233 each contribute to the Zn(2+) site. Residue cysteine 247 is the Glycyl thioester intermediate; for adenylyltransferase activity of the active site. Zn(2+)-binding residues include cysteine 305 and cysteine 308. The region spanning 354–450 (KTKAHLLLDV…WTNQVDQSFP (97 aa)) is the Rhodanese domain. The Cysteine persulfide intermediate; for sulfurtransferase activity role is filled by cysteine 409.

It in the N-terminal section; belongs to the HesA/MoeB/ThiF family. UBA4 subfamily. It depends on Zn(2+) as a cofactor.

Its subcellular location is the cytoplasm. It localises to the cytosol. The catalysed reaction is [molybdopterin-synthase sulfur-carrier protein]-C-terminal Gly-Gly + ATP + H(+) = [molybdopterin-synthase sulfur-carrier protein]-C-terminal Gly-Gly-AMP + diphosphate. It catalyses the reaction [molybdopterin-synthase sulfur-carrier protein]-C-terminal Gly-Gly-AMP + S-sulfanyl-L-cysteinyl-[cysteine desulfurase] + AH2 = [molybdopterin-synthase sulfur-carrier protein]-C-terminal-Gly-aminoethanethioate + L-cysteinyl-[cysteine desulfurase] + A + AMP + 2 H(+). The protein operates within tRNA modification; 5-methoxycarbonylmethyl-2-thiouridine-tRNA biosynthesis. It participates in cofactor biosynthesis; molybdopterin biosynthesis. Its function is as follows. Plays a central role in 2-thiolation of mcm(5)S(2)U at tRNA wobble positions of cytosolic tRNA(Lys), tRNA(Glu) and tRNA(Gln). Also essential during biosynthesis of the molybdenum cofactor. Acts by mediating the C-terminal thiocarboxylation of sulfur carriers URM1 and MOCS2A. Its N-terminus first activates URM1 and MOCS2A as acyl-adenylates (-COAMP), then the persulfide sulfur on the catalytic cysteine is transferred to URM1 and MOCS2A to form thiocarboxylation (-COSH) of their C-terminus. The reaction probably involves hydrogen sulfide that is generated from the persulfide intermediate and that acts as a nucleophile towards URM1 and MOCS2A. Subsequently, a transient disulfide bond is formed. Does not use thiosulfate as sulfur donor; NFS1 probably acting as a sulfur donor for thiocarboxylation reactions. The sequence is that of Adenylyltransferase and sulfurtransferase MOCS3 from Drosophila virilis (Fruit fly).